Here is a 156-residue protein sequence, read N- to C-terminus: Deoxyuridine 5'-triphosphate nucleotidohydrolase (156 aa).

It belongs to the dCTP deaminase family. Archaeal dUTPase subfamily. In terms of assembly, homotrimer.

It catalyses the reaction dUTP + H2O = dUMP + diphosphate + H(+). Its pathway is pyrimidine metabolism; dUMP biosynthesis; dUMP from dCTP (dUTP route): step 2/2. In terms of biological role, this enzyme is involved in nucleotide metabolism: it produces dUMP, the immediate precursor of thymidine nucleotides and it decreases the intracellular concentration of dUTP so that uracil cannot be incorporated into DNA. This chain is Deoxyuridine 5'-triphosphate nucleotidohydrolase, found in Methanocaldococcus jannaschii (strain ATCC 43067 / DSM 2661 / JAL-1 / JCM 10045 / NBRC 100440) (Methanococcus jannaschii).